The chain runs to 81 residues: ATP synthase subunit c (81 aa).

Transmembrane regions (helical) follow at residues 3–23 and 57–77; these read PLIA…GAIG and LAFM…LLFA.

This sequence belongs to the ATPase C chain family. In terms of assembly, F-type ATPases have 2 components, F(1) - the catalytic core - and F(0) - the membrane proton channel. F(1) has five subunits: alpha(3), beta(3), gamma(1), delta(1), epsilon(1). F(0) has four main subunits: a(1), b(1), b'(1) and c(10-14). The alpha and beta chains form an alternating ring which encloses part of the gamma chain. F(1) is attached to F(0) by a central stalk formed by the gamma and epsilon chains, while a peripheral stalk is formed by the delta, b and b' chains.

The protein localises to the cellular thylakoid membrane. Its function is as follows. F(1)F(0) ATP synthase produces ATP from ADP in the presence of a proton or sodium gradient. F-type ATPases consist of two structural domains, F(1) containing the extramembraneous catalytic core and F(0) containing the membrane proton channel, linked together by a central stalk and a peripheral stalk. During catalysis, ATP synthesis in the catalytic domain of F(1) is coupled via a rotary mechanism of the central stalk subunits to proton translocation. Key component of the F(0) channel; it plays a direct role in translocation across the membrane. A homomeric c-ring of between 10-14 subunits forms the central stalk rotor element with the F(1) delta and epsilon subunits. This Trichodesmium erythraeum (strain IMS101) protein is ATP synthase subunit c.